The sequence spans 342 residues: tRNA N6-adenosine threonylcarbamoyltransferase (342 aa).

Positions 115 and 119 each coordinate Fe cation. Substrate contacts are provided by residues 137-141 (IVSGG), D170, G183, D187, and N276. D304 serves as a coordination point for Fe cation.

It belongs to the KAE1 / TsaD family. Fe(2+) is required as a cofactor.

It is found in the cytoplasm. It carries out the reaction L-threonylcarbamoyladenylate + adenosine(37) in tRNA = N(6)-L-threonylcarbamoyladenosine(37) in tRNA + AMP + H(+). Functionally, required for the formation of a threonylcarbamoyl group on adenosine at position 37 (t(6)A37) in tRNAs that read codons beginning with adenine. Is involved in the transfer of the threonylcarbamoyl moiety of threonylcarbamoyl-AMP (TC-AMP) to the N6 group of A37, together with TsaE and TsaB. TsaD likely plays a direct catalytic role in this reaction. This chain is tRNA N6-adenosine threonylcarbamoyltransferase, found in Staphylococcus haemolyticus (strain JCSC1435).